The sequence spans 316 residues: Ribosomal protein L11 methyltransferase (316 aa).

Residues Thr-162, Gly-183, Asp-205, and Asn-248 each coordinate S-adenosyl-L-methionine.

The protein belongs to the methyltransferase superfamily. PrmA family.

The protein localises to the cytoplasm. It catalyses the reaction L-lysyl-[protein] + 3 S-adenosyl-L-methionine = N(6),N(6),N(6)-trimethyl-L-lysyl-[protein] + 3 S-adenosyl-L-homocysteine + 3 H(+). Functionally, methylates ribosomal protein L11. The protein is Ribosomal protein L11 methyltransferase of Levilactobacillus brevis (strain ATCC 367 / BCRC 12310 / CIP 105137 / JCM 1170 / LMG 11437 / NCIMB 947 / NCTC 947) (Lactobacillus brevis).